The following is a 920-amino-acid chain: Androgen receptor (920 aa).

The tract at residues 1–559 (MEVQLGLGRV…IDYYFPPQKT (559 aa)) is modulating. The segment at 1–587 (MEVQLGLGRV…GSCKVFFKRA (587 aa)) is interaction with ZNF318. 2 disordered regions span residues 36-167 (NPGP…LSLL) and 195-228 (QQQQ…YLGG). A compositionally biased stretch (low complexity) spans 44-91 (AASAAPPGASLLLLQQQQQQQQQQQQQQQQQQQQQQQETSPRQQQQQQ). Residue Ser83 is modified to Phosphoserine; by CDK9. At Ser96 the chain carries Phosphoserine. Residues 195-217 (QQQQQEAVSEGSSSGRAREASGA) are compositionally biased toward low complexity. Positions 218–228 (PTSSKDNYLGG) are enriched in polar residues. The residue at position 225 (Tyr225) is a Phosphotyrosine; by CSK. Residue Ser258 is modified to Phosphoserine. Position 269 is a phosphotyrosine; by CSK and TNK2 (Tyr269). Phosphotyrosine; by CSK is present on residues Tyr309, Tyr348, Tyr359, and Tyr364. Residue Tyr365 is modified to Phosphotyrosine; by CSK and TNK2. A Glycyl lysine isopeptide (Lys-Gly) (interchain with G-Cter in SUMO) cross-link involves residue Lys388. Phosphotyrosine; by CSK is present on Tyr395. Residue Lys521 forms a Glycyl lysine isopeptide (Lys-Gly) (interchain with G-Cter in SUMO) linkage. 2 positions are modified to phosphotyrosine; by CSK: Tyr535 and Tyr552. The interaction with LPXN stretch occupies residues 552-919 (YYFPPQKTCL…GKVKPIYFHT (368 aa)). 2 NR C4-type zinc fingers span residues 560 to 580 (CLIC…CGSC) and 596 to 620 (CASR…LRKC). Residues 560 to 632 (CLICGDEASG…AGMTLGARKL (73 aa)) constitute a DNA-binding region (nuclear receptor). Positions 572-662 (YGALTCGSCK…TEETTQKLTV (91 aa)) are interaction with HIPK3. Positions 592–919 (QKYLCASRND…GKVKPIYFHT (328 aa)) are interaction with CCAR1. The tract at residues 625-919 (MTLGARKLKK…GKVKPIYFHT (295 aa)) is interaction with KAT7. The residue at position 651 (Ser651) is a Phosphoserine; by STK4/MST1. The NR LBD domain occupies 669–900 (ECQPIFLNVL…DFPEMMAEII (232 aa)). 17beta-hydroxy-5alpha-androstan-3-one contacts are provided by Asn706 and Arg753. Residues Lys846 and Lys848 each participate in a glycyl lysine isopeptide (Lys-Gly) (interchain with G-Cter in ubiquitin) cross-link. Thr878 is a binding site for 17beta-hydroxy-5alpha-androstan-3-one. The residue at position 916 (Tyr916) is a Phosphotyrosine; by CSK.

Belongs to the nuclear hormone receptor family. NR3 subfamily. In terms of assembly, binds DNA as a homodimer. Part of a ternary complex containing AR, EFCAB6/DJBP and PARK7. Interacts with HIPK3 and NR0B2 in the presence of androgen. The ligand binding domain interacts with KAT7/HBO1 in the presence of dihydrotestosterone. Interacts with EFCAB6/DJBP, PQBP1, RANBP9, RBAK, SPDEF, SRA1, TGFB1I1 and RREB1. Interacts with ZMIZ1/ZIMP10 and ZMIZ2/ZMIP7 which both enhance its transactivation activity. Interacts with SLC30A9 and RAD54L2/ARIP4. Interacts with MACROD1 (via macro domain). Interacts via the ligand-binding domain with LXXLL and FXXLF motifs from NCOA1, NCOA2, NCOA3 and MAGEA11. Interacts (via nuclear receptor DNA binding domain and nuclear receptor ligand binding domain) with NCOA4. The AR N-terminal poly-Gln region binds Ran resulting in enhancement of AR-mediated transactivation. Ran-binding decreases as the poly-Gln length increases. Interacts with HIP1 (via coiled coil domain). Interacts (via ligand-binding domain) with TRIM68. Interacts with TNK2. Interacts with USP26. Interacts with RNF6. Interacts (regulated by RNF6 probably through polyubiquitination) with RNF14; regulates AR transcriptional activity. Interacts with PRMT2 and TRIM24. Interacts with RACK1. Interacts with RANBP10; this interaction enhances dihydrotestosterone-induced AR transcriptional activity. Interacts with PRPF6 in a hormone-independent way; this interaction enhances dihydrotestosterone-induced AR transcriptional activity. Interacts with STK4/MST1. Interacts with ZIPK/DAPK3. Interacts with LPXN. Interacts with MAK. Part of a complex containing AR, MAK and NCOA3. Interacts with CRY1. Interacts with CCAR1 and GATA2. Interacts with ZNF318. Interacts with BUD31. Interacts with ARID4A. Interacts with ARID4B. Interacts (via NR LBD domain) with ZBTB7A; the interaction is direct and androgen-dependent. Interacts with NCOR1. Interacts with NCOR2. Interacts with CRY2 in a ligand-dependent manner. In terms of processing, sumoylated on Lys-388 (major) and Lys-521. Ubiquitinated. Deubiquitinated by USP26. 'Lys-6' and 'Lys-27'-linked polyubiquitination by RNF6 modulates AR transcriptional activity and specificity. Post-translationally, phosphorylated in prostate cancer cells in response to several growth factors including EGF. Phosphorylation is induced by c-Src kinase (CSK). Tyr-535 is one of the major phosphorylation sites and an increase in phosphorylation and Src kinase activity is associated with prostate cancer progression. Phosphorylation by TNK2 enhances the DNA-binding and transcriptional activity and may be responsible for androgen-independent progression of prostate cancer. Phosphorylation at Ser-83 by CDK9 regulates AR promoter selectivity and cell growth. Phosphorylation by PAK6 leads to AR-mediated transcription inhibition. Palmitoylated by ZDHHC7 and ZDHHC21. Palmitoylation is required for plasma membrane targeting and for rapid intracellular signaling via ERK and AKT kinases and cAMP generation. Mainly expressed in heart and skeletal muscle. In terms of tissue distribution, expressed in basal and stromal cells of the prostate (at protein level).

The protein resides in the nucleus. Its subcellular location is the cytoplasm. AIM-100 (4-amino-5,6-biaryl-furo[2,3-d]pyrimidine) suppresses TNK2-mediated phosphorylation at Tyr-269. Inhibits the binding of the Tyr-269 phosphorylated form to androgen-responsive enhancers (AREs) and its transcriptional activity. Steroid hormone receptors are ligand-activated transcription factors that regulate eukaryotic gene expression and affect cellular proliferation and differentiation in target tissues. Transcription factor activity is modulated by bound coactivator and corepressor proteins like ZBTB7A that recruits NCOR1 and NCOR2 to the androgen response elements/ARE on target genes, negatively regulating androgen receptor signaling and androgen-induced cell proliferation. Transcription activation is also down-regulated by NR0B2. Activated, but not phosphorylated, by HIPK3 and ZIPK/DAPK3. Functionally, lacks the C-terminal ligand-binding domain and may therefore constitutively activate the transcription of a specific set of genes independently of steroid hormones. In Homo sapiens (Human), this protein is Androgen receptor (AR).